Consider the following 742-residue polypeptide: Mechanosensitive ion channel protein 9 (742 aa).

Positions 1–117 (MAERRVSNGE…REENGGRSLR (117 aa)) are disordered. Residues 17-26 (SDKEDSKDPR) are compositionally biased toward basic and acidic residues. Ser28 and Ser36 each carry phosphoserine. Basic and acidic residues predominate over residues 105-117 (DSTREENGGRSLR). Phosphoserine is present on residues Ser142 and Ser145. 6 helical membrane-spanning segments follow: residues 180–200 (AFLE…SLTI), 221–241 (MVTL…VFII), 261–281 (NVQV…LFDG), 292–312 (FLDF…LFLV), 524–544 (LITG…LDIA), and 559–579 (LAFM…FVFV).

The protein belongs to the MscS (TC 1.A.23) family. As to expression, detected in the epidermis, cortex, and endodermis of the root tip.

It localises to the cell membrane. Mechanosensitive channel that opens in response to stretch forces in the membrane lipid bilayer. In Arabidopsis thaliana (Mouse-ear cress), this protein is Mechanosensitive ion channel protein 9 (MSL9).